We begin with the raw amino-acid sequence, 79 residues long: Acyl carrier protein (79 aa).

In terms of domain architecture, Carrier spans 2–77 (STIEERVKKI…QAIDYVKAHV (76 aa)). Serine 37 bears the O-(pantetheine 4'-phosphoryl)serine mark.

This sequence belongs to the acyl carrier protein (ACP) family. 4'-phosphopantetheine is transferred from CoA to a specific serine of apo-ACP by AcpS. This modification is essential for activity because fatty acids are bound in thioester linkage to the sulfhydryl of the prosthetic group.

The protein resides in the cytoplasm. The protein operates within lipid metabolism; fatty acid biosynthesis. Functionally, carrier of the growing fatty acid chain in fatty acid biosynthesis. In Xanthomonas axonopodis pv. citri (strain 306), this protein is Acyl carrier protein.